The sequence spans 64 residues: Large ribosomal subunit protein bL35 (64 aa).

It belongs to the bacterial ribosomal protein bL35 family.

In Wolinella succinogenes (strain ATCC 29543 / DSM 1740 / CCUG 13145 / JCM 31913 / LMG 7466 / NCTC 11488 / FDC 602W) (Vibrio succinogenes), this protein is Large ribosomal subunit protein bL35.